The primary structure comprises 620 residues: MRRSCLMIRRRKRMFTAVTLLVLLVMGTSVCPVKAEGAARQMEALNRGLVAVKTDGGIFVSWRFLGTENASVLFNVYRDGQKLNAAPVKTTNYVDKNGSAGSTYTVRAVVNGTEQPASEKASVWAQPYHSVPLDKPAGGTTPKGESYTYSANDASVGDVDGDGQYELILKWDPSNSKDNSQDGYTGDVLIDAYKLDGTKLWRINLGKNIRAGAHYTQFMVYDLDGDGKAEVAMKTADGTKDGTGKVIGNANADYRNEQGRVLSGPEYLTVFQGSTGKELVTANFEPARGNVSDWGDSYGNRVDRFLAGIAYLDGQRPSLIMTRGYYAKTMLVAYNFRDGKLSKLWTLDSSKSGNEAFAGQGNHNLSIADVDGDGKDEIIFGSMAVDHDGKGMYSTGLGHGDALHTGDLDPGRPGLEVFQVHEDKNAKYGLSFRDAATGKILWGVYAGKDVGRGMAADIDPRYPGQEVWANGSLYSAKGVKIGSGVPSSTNFGIWWDGDLLREQLDSNRIDKWDYQNGVSKNMLTASGAAANNGTKATPTLQADLLGDWREEVVWRTEDSSALRIYTTTIPTEHRLYTLMHDPVYRLGIAWQNIAYNQPPHTSFFLGDGMAEQPKPNMYTP.

Residues 1 to 37 (MRRSCLMIRRRKRMFTAVTLLVLLVMGTSVCPVKAEG) form the signal peptide. The interval 133-152 (LDKPAGGTTPKGESYTYSAN) is disordered. N152 lines the substrate pocket. Ca(2+)-binding residues include D153, D158, D160, D162, Q164, and E166. Substrate is bound at residue D172. A carbohydrate contacts are provided by D187 and K207. Ca(2+)-binding residues include D222, D224, D226, K228, and E230. The a carbohydrate site is built by G238 and R255. H363, D369, D371, D373, K375, E377, D386, H387, H399, D401, D407, D409, R412, G414, E416, and E422 together coordinate Ca(2+). R452 lines the substrate pocket. Ca(2+) is bound by residues D457, D459, Y462, G464, E466, D496, D498, L500, and E502. Position 532–534 (532–534 (NGT)) interacts with substrate. Positions 543, 545, 547, 549, 551, 592, and 594 each coordinate Ca(2+). Residue Y595 coordinates substrate. N596 lines the Ca(2+) pocket.

Belongs to the polysaccharide lyase 11 family. Monomer. Requires Ca(2+) as cofactor. Mn(2+) serves as cofactor.

The protein resides in the secreted. The enzyme catalyses Endotype eliminative cleavage of L-alpha-rhamnopyranosyl-(1-&gt;4)-alpha-D-galactopyranosyluronic acid bonds of rhamnogalacturonan I domains in ramified hairy regions of pectin leaving L-rhamnopyranose at the reducing end and 4-deoxy-4,5-unsaturated D-galactopyranosyluronic acid at the non-reducing end.. Functionally, pectinolytic enzyme that degrades type I rhamnogalacturonan from plant cell walls and releases oligosaccharide products. Degrades rhamnogalacturonan, polygalacturonic acid, pectic acid and pectin. The polypeptide is Rhamnogalacturonan endolyase YesW (yesW) (Bacillus subtilis (strain 168)).